We begin with the raw amino-acid sequence, 229 residues long: Protein GrpE (229 aa).

Disordered stretches follow at residues 1 to 49 (MTEG…SANS) and 207 to 229 (DSTAKTEQGELGDNVTPHKEDGD). Over residues 13–24 (TDKRRIDPDTGE) the composition is skewed to basic and acidic residues.

This sequence belongs to the GrpE family. In terms of assembly, homodimer.

The protein localises to the cytoplasm. Participates actively in the response to hyperosmotic and heat shock by preventing the aggregation of stress-denatured proteins, in association with DnaK and GrpE. It is the nucleotide exchange factor for DnaK and may function as a thermosensor. Unfolded proteins bind initially to DnaJ; upon interaction with the DnaJ-bound protein, DnaK hydrolyzes its bound ATP, resulting in the formation of a stable complex. GrpE releases ADP from DnaK; ATP binding to DnaK triggers the release of the substrate protein, thus completing the reaction cycle. Several rounds of ATP-dependent interactions between DnaJ, DnaK and GrpE are required for fully efficient folding. The chain is Protein GrpE from Mycobacterium leprae (strain TN).